We begin with the raw amino-acid sequence, 449 residues long: UNC93-like protein MFSD11 (449 aa).

Residues L8–C28 traverse the membrane as a helical segment. N40 is a glycosylation site (N-linked (GlcNAc...) asparagine). Transmembrane regions (helical) follow at residues A53 to V73, G74 to I94, P96 to W116, I138 to W158, and R170 to I190. Residue S204 is modified to Phosphoserine. 6 consecutive transmembrane segments (helical) span residues M239–V259, L277–G297, P309–M329, F359–L379, A385–Y405, and L410–F430.

Belongs to the unc-93 family.

It is found in the membrane. The protein is UNC93-like protein MFSD11 (MFSD11) of Homo sapiens (Human).